Consider the following 150-residue polypeptide: C-type lectin 16 (150 aa).

Positions 1 to 27 (MKRVRVKVIFVSFGLLVVFLSLSGTAA) are cleaved as a signal peptide. Disulfide bonds link Cys29–Cys40, Cys57–Cys146, and Cys123–Cys138. A C-type lectin domain is found at 36–147 (YEGHCYKPFN…CRMLARFVCE (112 aa)).

The protein belongs to the snaclec family. Heteromultimer; disulfide-linked. In terms of tissue distribution, expressed by the venom gland.

The protein localises to the secreted. In terms of biological role, interferes with one step of hemostasis (modulation of platelet aggregation, or coagulation cascade, for example). This Crotalus adamanteus (Eastern diamondback rattlesnake) protein is C-type lectin 16.